Consider the following 278-residue polypeptide: Cation-dependent mannose-6-phosphate receptor (278 aa).

The N-terminal stretch at 1–21 is a signal peptide; that stretch reads MFPLSGCWRTELLLLLLLAVA. The Lumenal segment spans residues 22-188; the sequence is VRESWQIEEK…ACSPEVSHLS (167 aa). Positions 31-182 constitute an MRH domain; sequence KSCDLVGEKD…EMDSSLACSP (152 aa). Cys-33 and Cys-79 form a disulfide bridge. N-linked (GlcNAc...) asparagine glycans are attached at residues Asn-58, Asn-84, Asn-95, Asn-108, and Asn-114. Intrachain disulfides connect Cys-133–Cys-168 and Cys-146–Cys-180. Residues 189 to 209 form a helical membrane-spanning segment; the sequence is VGSILLVIFASLVAVYIIGGF. The Cytoplasmic portion of the chain corresponds to 210–278; it reads LYQRLVVGAK…EERDDHLLPM (69 aa). Residues 256-278 form a disordered region; the sequence is YRGVGDDQLGEESEERDDHLLPM. Ser-268 is modified (phosphoserine).

Homodimer. Binds GGA1, GGA2 and GGA3.

It is found in the lysosome membrane. Its function is as follows. Transport of phosphorylated lysosomal enzymes from the Golgi complex and the cell surface to lysosomes. Lysosomal enzymes bearing phosphomannosyl residues bind specifically to mannose-6-phosphate receptors in the Golgi apparatus and the resulting receptor-ligand complex is transported to an acidic prelyosomal compartment where the low pH mediates the dissociation of the complex. The polypeptide is Cation-dependent mannose-6-phosphate receptor (M6pr) (Rattus norvegicus (Rat)).